The chain runs to 319 residues: MDPQNQHGSGSSLVVIQQPSLDSRQRLDYEREIQPTAILSLDQIKAIRGSNEYTEGPSVVKRPAPRTAPRQEKHERTHEIIPINVNNNYEHRHTSHLGHAVLPSNARGPILSRSTSTGSAASSGSNSSASSEQGLLGRSPPTRPVPGHRSERAIRTQPKQLIVDDLKGSLKEDLTQHKFICEQCGKCKCGECTAPRTLPSCLACNRQCLCSAESMVEYGTCMCLVKGIFYHCSNDDEGDSYSDNPCSCSQSHCCSRYLCMGAMSLFLPCLLCYPPAKGCLKLCRRCYDWIHRPGCRCKNSNTVYCKLESCPSRGQGKPS.

Position 1 is an N-acetylmethionine (M1). Disordered regions lie at residues 54–78 and 100–160; these read TEGPSVVKRPAPRTAPRQEKHERTH and AVLP…QPKQ. Basic and acidic residues predominate over residues 69–78; sequence PRQEKHERTH. Residues 112-131 show a composition bias toward low complexity; it reads SRSTSTGSAASSGSNSSASS. In terms of domain architecture, SPR spans 183–295; it reads QCGKCKCGEC…CYDWIHRPGC (113 aa).

This sequence belongs to the sprouty family. In terms of assembly, forms heterodimers with SPRY2. Interacts with TESK1. Interacts with CAV1 (via C-terminus).

Its subcellular location is the cytoplasm. It is found in the membrane. Functionally, inhibits fibroblast growth factor (FGF)-induced retinal lens fiber differentiation, probably by inhibiting FGF-mediated phosphorylation of ERK1/2. Inhibits TGFB-induced epithelial-to-mesenchymal transition in lens epithelial cells. The sequence is that of Protein sprouty homolog 1 (SPRY1) from Homo sapiens (Human).